We begin with the raw amino-acid sequence, 289 residues long: 3-hydroxy-16-methoxy-2,3-dihydrotabersonine N-methyltransferase (289 aa).

The SAM motif I stretch occupies residues 71-80 (MLDVGSGLGG). Positions 134 to 142 (GKFDVVFTI) are SAM motif II. The segment at 161 to 170 (VAAPGAAIII) is SAM motif III. The Microbody targeting signal motif lies at 287–289 (KSI).

The protein belongs to the class I-like SAM-binding methyltransferase superfamily. gTMT family. In terms of assembly, homodimer. In terms of tissue distribution, mainly expressed in young leaves, and, to a lower extent, in mature leaves, flowers, stems and roots (at protein level).

It is found in the thylakoid. It localises to the peroxisome. The catalysed reaction is (3R)-3-hydroxy-16-methoxy-2,3-dihydrotabersonine + S-adenosyl-L-methionine = deacetoxyvindoline + S-adenosyl-L-homocysteine + H(+). It participates in alkaloid biosynthesis; vindoline biosynthesis. Its activity is regulated as follows. Inhibited by gamma-tocopherol. Functionally, S-adenosyl-L-methionine-dependent N-methyltransferase that catalyzes a nitrogen methylation involved in vindoline biosynthesis. Displays a strict requirement for a 2,3-dihydro bond in the aspidosperma skeleton. Can use 2,3-dihydrotabersonine, 2,3-dihydro-3-hydroxytabersonine and 2,3,6,7-tetraydro-3-hydroxytabersonine as substrates, but not tabersonine, vincadifformine, 21-hydroxycyclolochnericine, tryptamine, norharmane, harmaline, catharanthine, norajmaline, ajmaline, serpentine, ajmalicine, yohimbine or gamma-tocopherol. Inactive with picrinine as substrate. This Catharanthus roseus (Madagascar periwinkle) protein is 3-hydroxy-16-methoxy-2,3-dihydrotabersonine N-methyltransferase.